The sequence spans 127 residues: E3 ubiquitin-protein ligase PPP1R11 (127 aa).

2 disordered regions span residues M1–G55 and A70–H127. A2 is subject to N-acetylalanine. The span at E11–E23 shows a compositional bias: low complexity. Residues K40–G55 show a composition bias toward basic and acidic residues. The segment at H53–C63 is atypical RING finger domain 1. S74 and S75 each carry phosphoserine. T76 is subject to Phosphothreonine. S78 is subject to Phosphoserine. An atypical RING finger domain 2 region spans residues C86 to H95. Over residues H90–R100 the composition is skewed to basic residues. The span at T103–H127 shows a compositional bias: pro residues. At T110 the chain carries Phosphothreonine.

As to quaternary structure, interacts with TLR2 and UBE2D2. Auto-ubiquitinated.

The catalysed reaction is S-ubiquitinyl-[E2 ubiquitin-conjugating enzyme]-L-cysteine + [acceptor protein]-L-lysine = [E2 ubiquitin-conjugating enzyme]-L-cysteine + N(6)-ubiquitinyl-[acceptor protein]-L-lysine.. The protein operates within protein modification; protein ubiquitination. Functionally, atypical E3 ubiquitin-protein ligase which ubiquitinates TLR2 at 'Lys-754' leading to its degradation by the proteasome. Plays a role in regulating inflammatory cytokine release and gram-positive bacterial clearance by functioning, in part, through the ubiquitination and degradation of TLR2. Inhibitor of protein phosphatase 1. This Rattus norvegicus (Rat) protein is E3 ubiquitin-protein ligase PPP1R11 (Ppp1r11).